We begin with the raw amino-acid sequence, 87 residues long: UPF0250 protein ESA_02696 (87 aa).

The protein belongs to the UPF0250 family.

The sequence is that of UPF0250 protein ESA_02696 from Cronobacter sakazakii (strain ATCC BAA-894) (Enterobacter sakazakii).